We begin with the raw amino-acid sequence, 67 residues long: UPF0181 protein KPK_1966 (67 aa).

Residues 48 to 67 (EQIVARFEDEDEDQDEDEDD) are disordered. A compositionally biased stretch (acidic residues) spans 55–67 (EDEDEDQDEDEDD).

Belongs to the UPF0181 family.

The chain is UPF0181 protein KPK_1966 from Klebsiella pneumoniae (strain 342).